Consider the following 475-residue polypeptide: Protein FIZZY-RELATED 1 (475 aa).

The segment at 1 to 27 is disordered; the sequence is MEEDESTTPKKKSDSQLNLPPSMNRPT. The segment covering 15–27 has biased composition (polar residues); it reads SQLNLPPSMNRPT. WD repeat units follow at residues 166–203, 207–246, 249–289, 290–329, 332–374, 376–417, and 420–459; these read QDDF…VTKL, GVDE…NIRT, GHRL…SKLK, GHKS…PVLR, EHAA…HLNC, DTNS…KLAT, and GHSY…KSQS.

This sequence belongs to the WD repeat CDC20/Fizzy family. In terms of assembly, associates with the APC/C complex. Interacts with CDC20-1, CDC20-2, CYCA1-1, CYCA1-2, CYCA3-4, CYCB1-1 and CYCB1-2. Binds to GIG1. In terms of tissue distribution, expressed in the root tip, predominantly in the root cap, quiescent center cells, surrounding stem cells and columella.

Its subcellular location is the nucleus. It participates in protein modification; protein ubiquitination. Activator protein that regulates the ubiquitin ligase activity and substrate specificity of the anaphase promoting complex/cyclosome (APC/C). Required for meristem organization and maintenance of quiescent center identity and stem cells. This is Protein FIZZY-RELATED 1 (FZR1) from Arabidopsis thaliana (Mouse-ear cress).